A 36-amino-acid polypeptide reads, in one-letter code: Alpha-amylase inhibitor AI-3688 (36 aa).

Cys9 and Cys25 are oxidised to a cystine.

Inhibits mammalian alpha-amylases specifically but has no action on plant and microbial alpha-amylases. This Kitasatospora aureofaciens (Streptomyces aureofaciens) protein is Alpha-amylase inhibitor AI-3688.